The chain runs to 78 residues: Small nuclear ribonucleoprotein F (78 aa).

The 72-residue stretch at 7-78 (NPKPFLQGLI…NVLWVGESTV (72 aa)) folds into the Sm domain.

The protein belongs to the snRNP Sm proteins family. SmF/LSm6 subfamily. In terms of assembly, belongs to the 40S cdc5-associated complex (or cwf complex), a spliceosome sub-complex reminiscent of a late-stage spliceosome composed of the U2, U5 and U6 snRNAs and at least brr2, cdc5, cwf2/prp3, cwf3/syf1, cwf4/syf3, cwf5/ecm2, spp42/cwf6, cwf7/spf27, cwf8, cwf9, cwf10, cwf11, cwf12, prp45/cwf13, cwf14, cwf15, cwf16, cwf17, cwf18, cwf19, cwf20, cwf21, cwf22, cwf23, cwf24, cwf25, cwf26, cyp7/cwf27, cwf28, cwf29/ist3, lea1, msl1, prp5/cwf1, prp10, prp12/sap130, prp17, prp22, sap61, sap62, sap114, sap145, slu7, smb1, smd1, smd3, smf1, smg1 and syf2.

The protein localises to the nucleus. It is found in the cytoplasm. Plays a role in pre-mRNA splicing as a core component of the spliceosomal U1, U2, U4 and U5 small nuclear ribonucleoproteins (snRNPs), the building blocks of the spliceosome. This is Small nuclear ribonucleoprotein F (smf1) from Schizosaccharomyces pombe (strain 972 / ATCC 24843) (Fission yeast).